A 371-amino-acid polypeptide reads, in one-letter code: N-acetyldiaminopimelate deacetylase (371 aa).

Asp-68 is a catalytic residue. Catalysis depends on Glu-127, which acts as the Proton acceptor.

This sequence belongs to the peptidase M20A family. N-acetyldiaminopimelate deacetylase subfamily.

It carries out the reaction N-acetyl-(2S,6S)-2,6-diaminopimelate + H2O = (2S,6S)-2,6-diaminopimelate + acetate. Its pathway is amino-acid biosynthesis; L-lysine biosynthesis via DAP pathway; LL-2,6-diaminopimelate from (S)-tetrahydrodipicolinate (acetylase route): step 3/3. In terms of biological role, catalyzes the conversion of N-acetyl-diaminopimelate to diaminopimelate and acetate. This is N-acetyldiaminopimelate deacetylase from Listeria monocytogenes serovar 1/2a (strain ATCC BAA-679 / EGD-e).